A 290-amino-acid polypeptide reads, in one-letter code: Putative speedy protein-like protein 3 (290 aa).

The segment at 16-50 (GVDPSPPCRSLGWKRKKEWSDESEEEPEKELAPEP) is disordered. Residues 36-50 (DESEEEPEKELAPEP) show a composition bias toward acidic residues.

It belongs to the Speedy/Ringo family.

This is Putative speedy protein-like protein 3 from Homo sapiens (Human).